The chain runs to 327 residues: MSHLAELVASAKAAISQASDVAALDNVRVEYLGKKGHLTLQMTTLRELPPEERPAAGAVINEAKEQVQQALNARKAELESAALNARLAAETIDVSLPGRRIENGGLHPVTRTIDRIESFFGELGFTVATGPEIEDDYHNFDALNIPGHHPARADHDTFWFDTTRLLRTQTSGVQIRTMKAQQPPIRIIAPGRVYRNDYDQTHTPMFHQMEGLIVDTNISFTNLKGTLHDFLRNFFEEDLQIRFRPSYFPFTEPSAEVDVMGKNGKWLEVLGCGMVHPNVLRNVGIDPEVYSGFAFGMGMERLTMLRYGVTDLRLFFENDLRFLKQFK.

Glu252 contacts Mg(2+).

This sequence belongs to the class-II aminoacyl-tRNA synthetase family. Phe-tRNA synthetase alpha subunit type 1 subfamily. As to quaternary structure, tetramer of two alpha and two beta subunits. Requires Mg(2+) as cofactor.

Its subcellular location is the cytoplasm. It carries out the reaction tRNA(Phe) + L-phenylalanine + ATP = L-phenylalanyl-tRNA(Phe) + AMP + diphosphate + H(+). In Shigella boydii serotype 18 (strain CDC 3083-94 / BS512), this protein is Phenylalanine--tRNA ligase alpha subunit.